Consider the following 322-residue polypeptide: Undecaprenyl-phosphate 4-deoxy-4-formamido-L-arabinose transferase (322 aa).

At 1–235 (MFEIHPVKKV…TCLTTTPLRM (235 aa)) the chain is on the cytoplasmic side. A helical membrane pass occupies residues 236 to 256 (LSLLGSIIAIGGFSIAVLLVI). Residues 257-269 (LRLTFGPQWAAEG) are Periplasmic-facing. The chain crosses the membrane as a helical span at residues 270–290 (VFMLFAVLFTFIGAQFIGMGL). The Cytoplasmic portion of the chain corresponds to 291 to 322 (LGEYIGRIYTDVRARPRYFVQQVIRPSSKENE).

The protein belongs to the glycosyltransferase 2 family.

It is found in the cell inner membrane. It carries out the reaction UDP-4-deoxy-4-formamido-beta-L-arabinose + di-trans,octa-cis-undecaprenyl phosphate = 4-deoxy-4-formamido-alpha-L-arabinopyranosyl di-trans,octa-cis-undecaprenyl phosphate + UDP. It functions in the pathway glycolipid biosynthesis; 4-amino-4-deoxy-alpha-L-arabinose undecaprenyl phosphate biosynthesis; 4-amino-4-deoxy-alpha-L-arabinose undecaprenyl phosphate from UDP-4-deoxy-4-formamido-beta-L-arabinose and undecaprenyl phosphate: step 1/2. The protein operates within bacterial outer membrane biogenesis; lipopolysaccharide biosynthesis. Functionally, catalyzes the transfer of 4-deoxy-4-formamido-L-arabinose from UDP to undecaprenyl phosphate. The modified arabinose is attached to lipid A and is required for resistance to polymyxin and cationic antimicrobial peptides. The protein is Undecaprenyl-phosphate 4-deoxy-4-formamido-L-arabinose transferase of Shigella sonnei (strain Ss046).